The primary structure comprises 346 residues: NADH-quinone oxidoreductase subunit H 2 (346 aa).

8 consecutive transmembrane segments (helical) span residues 14–34, 83–103, 136–156, 172–192, 208–228, 260–280, 289–309, and 324–344; these read IAMV…VAYA, FAFL…FAVI, VGVL…VLAG, SAQM…VFML, GAWY…CSIA, FFMA…TLFL, LPGW…CMWI, and LGWK…GIIV.

It belongs to the complex I subunit 1 family. As to quaternary structure, NDH-1 is composed of 14 different subunits. Subunits NuoA, H, J, K, L, M, N constitute the membrane sector of the complex.

It is found in the cell inner membrane. It catalyses the reaction a quinone + NADH + 5 H(+)(in) = a quinol + NAD(+) + 4 H(+)(out). Functionally, NDH-1 shuttles electrons from NADH, via FMN and iron-sulfur (Fe-S) centers, to quinones in the respiratory chain. The immediate electron acceptor for the enzyme in this species is believed to be ubiquinone. Couples the redox reaction to proton translocation (for every two electrons transferred, four hydrogen ions are translocated across the cytoplasmic membrane), and thus conserves the redox energy in a proton gradient. This subunit may bind ubiquinone. The sequence is that of NADH-quinone oxidoreductase subunit H 2 from Geobacter metallireducens (strain ATCC 53774 / DSM 7210 / GS-15).